Consider the following 94-residue polypeptide: Small ribosomal subunit protein bS18 (94 aa).

It belongs to the bacterial ribosomal protein bS18 family. In terms of assembly, part of the 30S ribosomal subunit. Forms a tight heterodimer with protein bS6.

Its function is as follows. Binds as a heterodimer with protein bS6 to the central domain of the 16S rRNA, where it helps stabilize the platform of the 30S subunit. The polypeptide is Small ribosomal subunit protein bS18 (Polaromonas naphthalenivorans (strain CJ2)).